A 144-amino-acid polypeptide reads, in one-letter code: D-aminoacyl-tRNA deacylase (144 aa).

The Gly-cisPro motif, important for rejection of L-amino acids motif lies at 136-137 (GP).

The protein belongs to the DTD family. Homodimer.

The protein localises to the cytoplasm. It carries out the reaction glycyl-tRNA(Ala) + H2O = tRNA(Ala) + glycine + H(+). The catalysed reaction is a D-aminoacyl-tRNA + H2O = a tRNA + a D-alpha-amino acid + H(+). An aminoacyl-tRNA editing enzyme that deacylates mischarged D-aminoacyl-tRNAs. Also deacylates mischarged glycyl-tRNA(Ala), protecting cells against glycine mischarging by AlaRS. Acts via tRNA-based rather than protein-based catalysis; rejects L-amino acids rather than detecting D-amino acids in the active site. By recycling D-aminoacyl-tRNA to D-amino acids and free tRNA molecules, this enzyme counteracts the toxicity associated with the formation of D-aminoacyl-tRNA entities in vivo and helps enforce protein L-homochirality. This chain is D-aminoacyl-tRNA deacylase, found in Vibrio vulnificus (strain CMCP6).